The chain runs to 283 residues: Phosphatidylserine decarboxylase proenzyme (283 aa).

Active-site charge relay system; for autoendoproteolytic cleavage activity residues include Asp96, His152, and Ser250. The active-site Schiff-base intermediate with substrate; via pyruvic acid; for decarboxylase activity is Ser250. A Pyruvic acid (Ser); by autocatalysis modification is found at Ser250.

Belongs to the phosphatidylserine decarboxylase family. PSD-B subfamily. Prokaryotic type I sub-subfamily. In terms of assembly, heterodimer of a large membrane-associated beta subunit and a small pyruvoyl-containing alpha subunit. It depends on pyruvate as a cofactor. Is synthesized initially as an inactive proenzyme. Formation of the active enzyme involves a self-maturation process in which the active site pyruvoyl group is generated from an internal serine residue via an autocatalytic post-translational modification. Two non-identical subunits are generated from the proenzyme in this reaction, and the pyruvate is formed at the N-terminus of the alpha chain, which is derived from the carboxyl end of the proenzyme. The autoendoproteolytic cleavage occurs by a canonical serine protease mechanism, in which the side chain hydroxyl group of the serine supplies its oxygen atom to form the C-terminus of the beta chain, while the remainder of the serine residue undergoes an oxidative deamination to produce ammonia and the pyruvoyl prosthetic group on the alpha chain. During this reaction, the Ser that is part of the protease active site of the proenzyme becomes the pyruvoyl prosthetic group, which constitutes an essential element of the active site of the mature decarboxylase.

The protein localises to the cell membrane. The catalysed reaction is a 1,2-diacyl-sn-glycero-3-phospho-L-serine + H(+) = a 1,2-diacyl-sn-glycero-3-phosphoethanolamine + CO2. It participates in phospholipid metabolism; phosphatidylethanolamine biosynthesis; phosphatidylethanolamine from CDP-diacylglycerol: step 2/2. Functionally, catalyzes the formation of phosphatidylethanolamine (PtdEtn) from phosphatidylserine (PtdSer). In Acinetobacter baumannii (strain SDF), this protein is Phosphatidylserine decarboxylase proenzyme.